Here is a 225-residue protein sequence, read N- to C-terminus: Ribulose-phosphate 3-epimerase (225 aa).

Position 9 (S9) interacts with substrate. H34, D36, and H68 together coordinate a divalent metal cation. D36 acts as the Proton acceptor in catalysis. Substrate-binding positions include H68, 144 to 147 (GFGG), 177 to 179 (DGG), and 199 to 200 (GS). A divalent metal cation is bound at residue D177. D177 serves as the catalytic Proton donor.

Belongs to the ribulose-phosphate 3-epimerase family. Requires a divalent metal cation as cofactor.

It carries out the reaction D-ribulose 5-phosphate = D-xylulose 5-phosphate. Its pathway is carbohydrate degradation. Catalyzes the reversible epimerization of D-ribulose 5-phosphate to D-xylulose 5-phosphate. In Escherichia coli O157:H7, this protein is Ribulose-phosphate 3-epimerase.